The primary structure comprises 477 residues: Endo-1,4-beta-xylanase A (477 aa).

The N-terminal stretch at 1-41 (MGSYALPRSGVRRSIRVLLLALVVGVLGTATALIAPPGAHA) is a signal peptide. One can recognise a GH10 domain in the interval 42–340 (AESTLGAAAA…KAAYTAVLDA (299 aa)). Glu-169 (proton donor) is an active-site residue. Glu-277 serves as the catalytic Nucleophile. Positions 361 to 477 (SGRCLDVPDA…NGSNQRWTRT (117 aa)) constitute a Ricin B-type lectin domain. 3 cysteine pairs are disulfide-bonded: Cys-364–Cys-383, Cys-406–Cys-423, and Cys-447–Cys-466.

The protein belongs to the glycosyl hydrolase 10 (cellulase F) family.

The protein localises to the secreted. It catalyses the reaction Endohydrolysis of (1-&gt;4)-beta-D-xylosidic linkages in xylans.. It functions in the pathway glycan degradation; xylan degradation. Its function is as follows. Contributes to hydrolyze hemicellulose, the major component of plant cell-walls. XLNA and XLNB seem to act sequentially on the substrate to yield xylobiose and xylose as carbon sources. The sequence is that of Endo-1,4-beta-xylanase A (xlnA) from Streptomyces lividans.